The following is a 282-amino-acid chain: Phosphoglycerate mutase-like protein 1 (282 aa).

The Tele-phosphohistidine intermediate role is filled by histidine 23. Glutamate 135 serves as the catalytic Proton donor/acceptor.

It belongs to the phosphoglycerate mutase family.

Its function is as follows. May play a role in carbohydrates metabolism. This is Phosphoglycerate mutase-like protein 1 from Arabidopsis thaliana (Mouse-ear cress).